Reading from the N-terminus, the 205-residue chain is NADH-quinone oxidoreductase subunit C (205 aa).

Belongs to the complex I 30 kDa subunit family. NDH-1 is composed of 14 different subunits. Subunits NuoB, C, D, E, F, and G constitute the peripheral sector of the complex.

It localises to the cell inner membrane. The enzyme catalyses a quinone + NADH + 5 H(+)(in) = a quinol + NAD(+) + 4 H(+)(out). Functionally, NDH-1 shuttles electrons from NADH, via FMN and iron-sulfur (Fe-S) centers, to quinones in the respiratory chain. The immediate electron acceptor for the enzyme in this species is believed to be ubiquinone. Couples the redox reaction to proton translocation (for every two electrons transferred, four hydrogen ions are translocated across the cytoplasmic membrane), and thus conserves the redox energy in a proton gradient. This Bartonella bacilliformis (strain ATCC 35685 / KC583 / Herrer 020/F12,63) protein is NADH-quinone oxidoreductase subunit C.